Here is a 161-residue protein sequence, read N- to C-terminus: Nucleotide-binding protein lpg1167 (161 aa).

Belongs to the YajQ family.

Functionally, nucleotide-binding protein. The polypeptide is Nucleotide-binding protein lpg1167 (Legionella pneumophila subsp. pneumophila (strain Philadelphia 1 / ATCC 33152 / DSM 7513)).